The primary structure comprises 380 residues: Cytoplasmic protein NCK2 (380 aa).

T2 is modified (N-acetylthreonine). In terms of domain architecture, SH3 1 spans 2–61; that stretch reads TEEVIVIAKWDYTAQQDQELDIKKNERLWLLDDSKTWWRVRNAANRTGYVPSNYVERKNS. The interval 79 to 102 is disordered; it reads KTRRKTSARDASPTPSTDAEYPAN. Phosphoserine is present on S90. T92 is subject to Phosphothreonine. S94 bears the Phosphoserine mark. A Phosphotyrosine modification is found at Y110. SH3 domains follow at residues 111–170 and 195–257; these read DLNI…EEVD and RVLH…VLSD. An SH2 domain is found at 285-380; the sequence is WYYGNVTRHQ…EKLYLVRALQ (96 aa).

Interacts with DOCK1, LIMS1 and TGFB1I1. Part of a complex containing PPP1R15B, PP1 and NCK2. Interacts with FASLG. Interacts with AXL. Interacts with PAK1, PKN2 and SOS1. Interacts (via SH2 domain) with EGFR. Interacts (via SH2 domain) with DDR1. Interacts with IRS1. Post-translationally, phosphorylated. Ubiquitous.

It localises to the cytoplasm. The protein resides in the endoplasmic reticulum. Functionally, adapter protein which associates with tyrosine-phosphorylated growth factor receptors or their cellular substrates. Maintains low levels of EIF2S1 phosphorylation by promoting its dephosphorylation by PP1. Plays a role in ELK1-dependent transcriptional activation in response to activated Ras signaling. In Homo sapiens (Human), this protein is Cytoplasmic protein NCK2 (NCK2).